Consider the following 735-residue polypeptide: Protein RETICULATA-RELATED 5, chloroplastic (735 aa).

The transit peptide at 1-75 (MKPTTNGGLL…TRRAILVAPP (75 aa)) directs the protein to the chloroplast. A run of 2 helical transmembrane segments spans residues 519 to 539 (ASVV…FISY) and 582 to 602 (VIIG…AAVG). Residues 714-726 (ASQSTVEYSTTEE) are compositionally biased toward polar residues. The segment at 714-735 (ASQSTVEYSTTEEASMDDLKNQ) is disordered.

It belongs to the RETICULATA family.

The protein localises to the plastid. It is found in the chloroplast membrane. In terms of biological role, may play a role in leaf development. This is Protein RETICULATA-RELATED 5, chloroplastic from Arabidopsis thaliana (Mouse-ear cress).